The primary structure comprises 402 residues: Candidapepsin-1 (402 aa).

The or 18, or 21 signal peptide spans 1–25 (MVAIVTLTRQVLLTIALALFAQGAA). Residues 26–62 (IPEEAAKRDDNPGFVALDFDVLRKPLNLTEALLREKR) constitute a propeptide, activation peptide. An N-linked (GlcNAc...) asparagine glycan is attached at Asn52. Residues 76 to 389 (YASKVSVGSN…NLDANTISIA (314 aa)) form the Peptidase A1 domain. Asp94 is a catalytic residue. An intrachain disulfide couples Cys109 to Cys115. The active site involves Asp282. Residues Cys320 and Cys354 are joined by a disulfide bond.

This sequence belongs to the peptidase A1 family. Post-translationally, O-glycosylated.

Its subcellular location is the secreted. The catalysed reaction is Preferential cleavage at the carboxyl of hydrophobic amino acids, but fails to cleave 15-Leu-|-Tyr-16, 16-Tyr-|-Leu-17 and 24-Phe-|-Phe-25 of insulin B chain. Activates trypsinogen, and degrades keratin.. The sequence is that of Candidapepsin-1 (SAPP1) from Candida parapsilosis (Yeast).